A 216-amino-acid polypeptide reads, in one-letter code: ATP phosphoribosyltransferase (216 aa).

The protein belongs to the ATP phosphoribosyltransferase family. Short subfamily. In terms of assembly, heteromultimer composed of HisG and HisZ subunits.

Its subcellular location is the cytoplasm. The catalysed reaction is 1-(5-phospho-beta-D-ribosyl)-ATP + diphosphate = 5-phospho-alpha-D-ribose 1-diphosphate + ATP. It participates in amino-acid biosynthesis; L-histidine biosynthesis; L-histidine from 5-phospho-alpha-D-ribose 1-diphosphate: step 1/9. Its function is as follows. Catalyzes the condensation of ATP and 5-phosphoribose 1-diphosphate to form N'-(5'-phosphoribosyl)-ATP (PR-ATP). Has a crucial role in the pathway because the rate of histidine biosynthesis seems to be controlled primarily by regulation of HisG enzymatic activity. The sequence is that of ATP phosphoribosyltransferase from Chromohalobacter salexigens (strain ATCC BAA-138 / DSM 3043 / CIP 106854 / NCIMB 13768 / 1H11).